We begin with the raw amino-acid sequence, 316 residues long: Glutathione synthetase (316 aa).

Residues 125–310 form the ATP-grasp domain; that stretch reads KLFTAWFSDL…ITGMLMDAIE (186 aa). A glycan (N-beta-linked (GlcNAc) arginine) is linked at R256. Residues E281 and N283 each coordinate Mg(2+).

The protein belongs to the prokaryotic GSH synthase family. Mg(2+) is required as a cofactor. Requires Mn(2+) as cofactor.

It carries out the reaction gamma-L-glutamyl-L-cysteine + glycine + ATP = glutathione + ADP + phosphate + H(+). It participates in sulfur metabolism; glutathione biosynthesis; glutathione from L-cysteine and L-glutamate: step 2/2. This Escherichia coli O127:H6 (strain E2348/69 / EPEC) protein is Glutathione synthetase.